Consider the following 94-residue polypeptide: Large ribosomal subunit protein uL23 (94 aa).

This sequence belongs to the universal ribosomal protein uL23 family. In terms of assembly, part of the 50S ribosomal subunit. Contacts protein L29, and trigger factor when it is bound to the ribosome.

One of the early assembly proteins it binds 23S rRNA. One of the proteins that surrounds the polypeptide exit tunnel on the outside of the ribosome. Forms the main docking site for trigger factor binding to the ribosome. This is Large ribosomal subunit protein uL23 from Dehalococcoides mccartyi (strain ATCC BAA-2100 / JCM 16839 / KCTC 5957 / BAV1).